A 254-amino-acid polypeptide reads, in one-letter code: Alcohol dehydrogenase 1 (254 aa).

10–33 (FVAGLGGIGFDTSREIVKSGPKNL) is an NAD(+) binding site. Substrate is bound at residue Ser138. Tyr151 functions as the Proton acceptor in the catalytic mechanism.

It belongs to the short-chain dehydrogenases/reductases (SDR) family. As to quaternary structure, homodimer.

The enzyme catalyses a primary alcohol + NAD(+) = an aldehyde + NADH + H(+). It carries out the reaction a secondary alcohol + NAD(+) = a ketone + NADH + H(+). The sequence is that of Alcohol dehydrogenase 1 (Adh1) from Drosophila mulleri (Fruit fly).